Here is a 299-residue protein sequence, read N- to C-terminus: ATP phosphoribosyltransferase (299 aa).

Belongs to the ATP phosphoribosyltransferase family. Long subfamily. In terms of assembly, equilibrium between an active dimeric form, an inactive hexameric form and higher aggregates. Interconversion between the various forms is largely reversible and is influenced by the natural substrates and inhibitors of the enzyme. The cofactor is Mg(2+).

It is found in the cytoplasm. It carries out the reaction 1-(5-phospho-beta-D-ribosyl)-ATP + diphosphate = 5-phospho-alpha-D-ribose 1-diphosphate + ATP. It functions in the pathway amino-acid biosynthesis; L-histidine biosynthesis; L-histidine from 5-phospho-alpha-D-ribose 1-diphosphate: step 1/9. Feedback inhibited by histidine. In terms of biological role, catalyzes the condensation of ATP and 5-phosphoribose 1-diphosphate to form N'-(5'-phosphoribosyl)-ATP (PR-ATP). Has a crucial role in the pathway because the rate of histidine biosynthesis seems to be controlled primarily by regulation of HisG enzymatic activity. In Buchnera aphidicola subsp. Schlechtendalia chinensis, this protein is ATP phosphoribosyltransferase.